A 218-amino-acid polypeptide reads, in one-letter code: Zinc finger BED domain-containing protein 2 (218 aa).

Acidic residues predominate over residues 1 to 11 (MMRREDEEEEG). A disordered region spans residues 1 to 24 (MMRREDEEEEGTMMKAKGDLEMKE). Residues 52 to 113 (TRFSEAWEYF…SMHREELEKS (62 aa)) form a BED-type zinc finger. Residues Cys78, Cys81, His101, and His106 each contribute to the Zn(2+) site. Residues 104–137 (SMHREELEKSGHGQAGQRQDPRPHGPQLPTGIEG) are disordered. The span at 105–114 (MHREELEKSG) shows a compositional bias: basic and acidic residues.

As to expression, expressed in keratinocytes.

It localises to the nucleus. Its function is as follows. Transcriptional regulator which has intrinsic repressor activity and which competes with the transcriptional activator IRF1 for binding to the 5'-[CA]GAA[AC]C[CT]-3' consensus sequence in gene promoters. May thereby play a role in keratinocyte differentiation. The sequence is that of Zinc finger BED domain-containing protein 2 (ZBED2) from Homo sapiens (Human).